A 172-amino-acid chain; its full sequence is Trypsin inhibitor DE-3 (172 aa).

2 disulfide bridges follow: Cys39/Cys83 and Cys132/Cys139.

This sequence belongs to the protease inhibitor I3 (leguminous Kunitz-type inhibitor) family.

Functionally, inhibition of trypsin. In Erythrina variegata (Indian coral tree), this protein is Trypsin inhibitor DE-3.